Here is a 549-residue protein sequence, read N- to C-terminus: Eukaryotic translation initiation factor 4B2 (549 aa).

2 disordered regions span residues 1 to 446 (MSKP…DLIR) and 465 to 549 (FRPR…REGW). Low complexity predominate over residues 24–46 (AEATATAADSQSFPSLKEAATAK). Gly residues-rich tracts occupy residues 96–109 (RLGGGFSSYGGGRS) and 126–136 (SWGGGGGGRRS). Residues 169–176 (GKKSLPSF) carry the Nuclear localization signal 1 motif. Residues 184 to 218 (RYGGGGGSFGGGGGGGAGSYGGGGAGAGSGGGGGF) show a composition bias toward gly residues. The Nuclear localization signal 2 motif lies at 234–241 (SSTFGSGF). Residues 263-278 (QEERRRLVFEPRKADT) are compositionally biased toward basic and acidic residues. The segment covering 281 to 292 (SETPTAVKTSKP) has biased composition (polar residues). Residues 299-323 (RPREQVLAEKGLDWKKLDSDIEAKK) show a composition bias toward basic and acidic residues. Residues 327–349 (SRPSSAQSSRPSSAQSNRSESSA) are compositionally biased toward low complexity. 3 stretches are compositionally biased toward basic and acidic residues: residues 369–431 (AKPR…KESQ), 485–507 (ERPHSRAGSIDESRSVESMERPR), and 518–549 (PVDDRRNFQGSKERGFFNNRNFDRSSSAREGW).

It belongs to the eIF-4 subunit B family. Homodimer. Nonspherical monomer. mRNA-discriminating component of initiation complexes. In terms of processing, phosphorylated.

The protein localises to the nucleus. Functionally, promotes the eIF4F and eIF4A RNA-dependent ATP-hydrolysis activity with different efficiency depending on mRNAs, thus providing mRNA discrimination during initiation of translation. This is Eukaryotic translation initiation factor 4B2 from Arabidopsis thaliana (Mouse-ear cress).